We begin with the raw amino-acid sequence, 787 residues long: Integrin beta-3 (787 aa).

Residues 1–25 form the signal peptide; the sequence is MRAQWPGQLWAALLALGALAGVVVG. Topologically, residues 26–717 are extracellular; it reads ESNICTTRGV…EEPECPKGPD (692 aa). Residues 29-75 form the PSI domain; that stretch reads ICTTRGVNSCQQCLAVSPVCAWCSDETLSQGSPRCNLKENLLKDNCA. 19 disulfides stabilise this stretch: Cys-30–Cys-48, Cys-38–Cys-460, Cys-41–Cys-63, Cys-51–Cys-74, Cys-202–Cys-209, Cys-257–Cys-298, Cys-399–Cys-411, Cys-431–Cys-458, Cys-462–Cys-482, Cys-473–Cys-485, Cys-487–Cys-496, Cys-498–Cys-528, Cys-511–Cys-526, Cys-520–Cys-531, Cys-533–Cys-546, Cys-548–Cys-569, Cys-553–Cys-567, Cys-561–Cys-572, and Cys-574–Cys-583. One can recognise a VWFA domain in the interval 134–376; that stretch reads DYPVDIYYLM…QLIVDAYGKI (243 aa). Positions 146 and 148 each coordinate Mg(2+). Residues Ser-148, Asp-151, Asp-152, and Asp-183 each coordinate Ca(2+). The tract at residues 202–209 is CX3CL1-binding; it reads CYNMKNAC. The segment at 202–209 is involved in CX3CL1-, NRG1-, FGF1- and IGF1-binding; it reads CYNMKNAC. Residues Asn-240, Asp-242, Pro-244, Glu-245, and Asp-276 each coordinate Ca(2+). Glu-245 serves as a coordination point for Mg(2+). The segment at 292–312 is CX3CL1-binding; it reads LPNDGHCHIGTDNHYSASTTM. Residues Asn-345 and Asn-396 are each glycosylated (N-linked (GlcNAc...) asparagine). 4 I-EGF domains span residues 462–497, 498–547, 548–584, and 585–624; these read CQAF…SMCE, CSEE…KYCE, CDDF…YYCN, and CTTR…DTCE. Asn-477 carries an N-linked (GlcNAc...) asparagine glycan. Asn-584 is a glycosylation site (N-linked (GlcNAc...) asparagine). 9 disulfide bridges follow: Cys-585-Cys-608, Cys-592-Cys-606, Cys-600-Cys-611, Cys-613-Cys-623, Cys-626-Cys-629, Cys-633-Cys-680, Cys-639-Cys-660, Cys-642-Cys-656, and Cys-688-Cys-712. Asn-679 carries N-linked (GlcNAc...) asparagine glycosylation. The chain crosses the membrane as a helical span at residues 718 to 740; that stretch reads ILVVLLSVMGAILLIGLATLLIW. The Cytoplasmic portion of the chain corresponds to 741-787; the sequence is KLLITIHDRKEFAKFEEERARAKWDTANNPLYKEATSTFTNITYRGT. Thr-766 carries the phosphothreonine modification. Residue Tyr-772 is modified to Phosphotyrosine. The LIR signature appears at 776-782; it reads TSTFTNI. Position 778 is a phosphothreonine (Thr-778). Tyr-784 is modified (phosphotyrosine).

This sequence belongs to the integrin beta chain family. In terms of assembly, heterodimer of an alpha and a beta subunit. Beta-3 (ITGB3) associates with either alpha-IIB (ITGA2B) or alpha-V (ITGAV). Interacts with FLNB and COMP. Interacts with PDIA6 following platelet stimulation. Interacts with SYK; upon activation by ITGB3 promotes platelet adhesion. Interacts with MYO10. Interacts with DAB2. Interacts with FERMT2. Integrin ITGAV:ITGB3 interacts with FBLN5 (via N-terminus). Interacts with EMP2; regulates the levels of the heterodimer ITGA5:ITGB3 integrin expression on the plasma membrane. ITGAV:ITGB3 interacts with CCN3. ITGAV:ITGB3 and ITGA2B:ITGB3 interact with SELP (via C-type lectin domain); the interaction mediates cell-cell interaction and adhesion. ITGAV:ITGB3 interacts with AGRA2. ITGAV:ITGB3 is found in a ternary complex with CX3CR1 and CX3CL1. ITGAV:ITGB3 is found in a ternary complex with NRG1 and ERBB3. ITGAV:ITGB3 is found in a ternary complex with FGF1 and FGFR1. ITGAV:ITGB3 interacts with FGF2; it is likely that FGF2 can simultaneously bind ITGAV:ITGB3 and FGF receptors. ITGAV:ITGB3 binds to IL1B. ITGAV:ITGB3 is found in a ternary complex with IGF1 and IGF1R. ITGAV:ITGB3 interacts with IGF2. ITGAV:ITGB3 interacts with FBN1. ITGAV:ITGB3 interacts with CD9, CD81 and CD151 (via second extracellular domain). Interacts (via the allosteric site (site 2)) with CXCL12 in a CXCR4-independent manner. Interacts with MXRA8/DICAM; the interaction inhibits ITGAV:ITGB3 heterodimer formation. ITGAV:ITGB3 interacts with PTN. Forms a complex with PTPRZ1 and PTN that stimulates endothelial cell migration through ITGB3 Tyr-772 phosphorylation. ITGAV:ITGB3 interacts with SLC6A4. Interacts with SLC6A4 (via C-terminus); this interaction regulates SLC6A4 trafficking. ITGA2B:ITGB3 interacts with PPIA/CYPA; the interaction is ROS and PPIase activity-dependent and is increased in the presence of thrombin. Interacts with tensin TNS3; TNS3 also interacts with PEAK1, thus acting as an adapter molecule to bridge the association of PEAK1 with ITGB3. Interacts with TM4SF19. Phosphorylated on tyrosine residues in response to thrombin-induced platelet aggregation. Probably involved in outside-in signaling.

The protein localises to the cell membrane. Its subcellular location is the cell projection. It localises to the lamellipodium membrane. The protein resides in the cell junction. It is found in the focal adhesion. The protein localises to the postsynaptic cell membrane. Its subcellular location is the synapse. Integrin alpha-V/beta-3 (ITGAV:ITGB3) is a receptor for cytotactin, fibronectin, laminin, matrix metalloproteinase-2, osteopontin, osteomodulin, prothrombin, thrombospondin, vitronectin and von Willebrand factor. Integrin alpha-IIB/beta-3 (ITGA2B:ITGB3) is a receptor for fibronectin, fibrinogen, plasminogen, prothrombin, thrombospondin and vitronectin. Integrins alpha-IIB/beta-3 and alpha-V/beta-3 recognize the sequence R-G-D in a wide array of ligands. Integrin alpha-IIB/beta-3 recognizes the sequence H-H-L-G-G-G-A-K-Q-A-G-D-V in fibrinogen gamma chain. Following activation integrin alpha-IIB/beta-3 brings about platelet/platelet interaction through binding of soluble fibrinogen. This step leads to rapid platelet aggregation which physically plugs ruptured endothelial surfaces. Fibrinogen binding enhances SELP expression in activated platelets. ITGAV:ITGB3 binds to fractalkine (CX3CL1) and acts as its coreceptor in CX3CR1-dependent fractalkine signaling. ITGAV:ITGB3 binds to NRG1 (via EGF domain) and this binding is essential for NRG1-ERBB signaling. ITGAV:ITGB3 binds to FGF1 and this binding is essential for FGF1 signaling. ITGAV:ITGB3 binds to FGF2 and this binding is essential for FGF2 signaling. ITGAV:ITGB3 binds to IGF1 and this binding is essential for IGF1 signaling. ITGAV:ITGB3 binds to IGF2 and this binding is essential for IGF2 signaling. ITGAV:ITGB3 binds to IL1B and this binding is essential for IL1B signaling. ITGAV:ITGB3 binds to PLA2G2A via a site (site 2) which is distinct from the classical ligand-binding site (site 1) and this induces integrin conformational changes and enhanced ligand binding to site 1. ITGAV:ITGB3 acts as a receptor for fibrillin-1 (FBN1) and mediates R-G-D-dependent cell adhesion to FBN1. ITGAV:ITGB3 binds to the Lilrb4a/Gp49b receptor and enhances the Lilrb4a-mediated inhibition of mast cell activation. ITGAV:ITGB3 also suppresses marginal zone B cell antibody production through its interaction with Lilrb4a. In brain, plays a role in synaptic transmission and plasticity. Involved in the regulation of the serotonin neurotransmission, is required to localize to specific compartments within the synapse the serotonin receptor SLC6A4 and for an appropriate reuptake of serotonin. Controls excitatory synaptic strength by regulating GRIA2-containing AMPAR endocytosis, which affects AMPAR abundance and composition. ITGAV:ITGB3 act as a receptor for CD40LG. ITGAV:ITGB3 acts as a receptor for IBSP and promotes cell adhesion and migration to IBSP. This is Integrin beta-3 from Mus musculus (Mouse).